Here is a 232-residue protein sequence, read N- to C-terminus: Histone H1B (232 aa).

Over residues 1–18 (MSDPAVEVTPAVPVASPA) the composition is skewed to low complexity. Disordered regions lie at residues 1–44 (MSDP…PPVS) and 99–232 (QTKG…AKKA). The region spanning 39 to 113 (THPPVSEMVV…GASGSFKLPA (75 aa)) is the H15 domain. Basic residues-rich tracts occupy residues 132–141 (KPKKAAAKPK), 147–173 (KVKKTIAKKPKAAAATKIKKPVAKTTK), 181–197 (AAKKAAPKPKAAPKPKA), 205–214 (KRAAAPKAKK), and 222–232 (KAAKKPAAKKA).

This sequence belongs to the histone H1/H5 family.

It is found in the nucleus. Its subcellular location is the chromosome. Functionally, histones H1 are necessary for the condensation of nucleosome chains into higher-order structures. This Chironomus tentans (Midge) protein is Histone H1B.